Consider the following 217-residue polypeptide: Putative threonylcarbamoyl-AMP synthase (217 aa).

The region spanning 14–199 (SRGIVSAVGA…TPRVLRPGPV (186 aa)) is the YrdC-like domain.

Belongs to the SUA5 family.

The protein localises to the cytoplasm. The catalysed reaction is L-threonine + hydrogencarbonate + ATP = L-threonylcarbamoyladenylate + diphosphate + H2O. In terms of biological role, required for the formation of a threonylcarbamoyl group on adenosine at position 37 (t(6)A37) in tRNAs that read codons beginning with adenine. Catalyzes the conversion of L-threonine, HCO(3)(-)/CO(2) and ATP to give threonylcarbamoyl-AMP (TC-AMP) as the acyladenylate intermediate, with the release of diphosphate. The chain is Putative threonylcarbamoyl-AMP synthase from Mycobacterium tuberculosis (strain CDC 1551 / Oshkosh).